Here is a 173-residue protein sequence, read N- to C-terminus: Small ribosomal subunit protein uS10m (173 aa).

Belongs to the universal ribosomal protein uS10 family. Component of the mitochondrial ribosome small subunit (28S) which comprises a 12S rRNA and about 30 distinct proteins.

It localises to the mitochondrion. The protein is Small ribosomal subunit protein uS10m (mRpS10) of Drosophila melanogaster (Fruit fly).